The following is a 908-amino-acid chain: Translation initiation factor IF-2 (908 aa).

Residues 145 to 312 (EIPGLTQRAK…KGKKRQAEKI (168 aa)) form a disordered region. Basic and acidic residues predominate over residues 167 to 177 (VVERPEARPSA). Low complexity-rich tracts occupy residues 194–217 (RPEG…PRPG) and 263–276 (VAGA…GAAV). Residues 278–296 (KRKEEFKKTELFEKHERVF) show a composition bias toward basic and acidic residues. One can recognise a tr-type G domain in the interval 408-577 (KRPPVVTIMG…LLQADVLELK (170 aa)). A G1 region spans residues 417–424 (GHVDHGKT). Position 417-424 (417-424 (GHVDHGKT)) interacts with GTP. A G2 region spans residues 442-446 (GITQH). Positions 463 to 466 (DTPG) are G3. GTP-binding positions include 463–467 (DTPGH) and 517–520 (NKID). The tract at residues 517-520 (NKID) is G4. Positions 553 to 555 (SAK) are G5.

Belongs to the TRAFAC class translation factor GTPase superfamily. Classic translation factor GTPase family. IF-2 subfamily.

Its subcellular location is the cytoplasm. One of the essential components for the initiation of protein synthesis. Protects formylmethionyl-tRNA from spontaneous hydrolysis and promotes its binding to the 30S ribosomal subunits. Also involved in the hydrolysis of GTP during the formation of the 70S ribosomal complex. The chain is Translation initiation factor IF-2 from Geotalea daltonii (strain DSM 22248 / JCM 15807 / FRC-32) (Geobacter daltonii).